The primary structure comprises 280 residues: Dexamethasone-induced Ras-related protein 1 (280 aa).

Cys11 is subject to S-nitrosocysteine. 31–38 (GSSKVGKT) is a GTP binding site. The short motif at 53–61 (YTPTIEDFH) is the Effector region element. Residues 78–82 (DTSGN) and 145–148 (NKGD) each bind GTP. Cys277 carries the cysteine methyl ester modification. A lipid anchor (S-farnesyl cysteine) is attached at Cys277. A propeptide spans 278-280 (VIS) (removed in mature form).

It belongs to the small GTPase superfamily. RasD family. As to quaternary structure, component of a complex, at least composed of APBB1, RASD1/DEXRAS1 and APP. Interacts with APBB1/FE65. Forms a ternary complex with CAPON and NOS1. S-nitrosylation stimulates guanine-nucleotide exchange activity. Expressed in brain, heart, kidney and liver.

It localises to the cell membrane. Its subcellular location is the cytoplasm. The protein localises to the perinuclear region. It is found in the nucleus. Its function is as follows. Small GTPase. Negatively regulates the transcription regulation activity of the APBB1/FE65-APP complex via its interaction with APBB1/FE65. The polypeptide is Dexamethasone-induced Ras-related protein 1 (Rasd1) (Mus musculus (Mouse)).